A 157-amino-acid polypeptide reads, in one-letter code: Small ribosomal subunit protein uS7 (157 aa).

The protein belongs to the universal ribosomal protein uS7 family. Part of the 30S ribosomal subunit. Contacts proteins S9 and S11.

In terms of biological role, one of the primary rRNA binding proteins, it binds directly to 16S rRNA where it nucleates assembly of the head domain of the 30S subunit. Is located at the subunit interface close to the decoding center, probably blocks exit of the E-site tRNA. This Opitutus terrae (strain DSM 11246 / JCM 15787 / PB90-1) protein is Small ribosomal subunit protein uS7.